Reading from the N-terminus, the 424-residue chain is CinA-like protein (424 aa).

This sequence belongs to the CinA family.

In Prochlorococcus marinus (strain MIT 9312), this protein is CinA-like protein.